We begin with the raw amino-acid sequence, 436 residues long: Enolase (436 aa).

Residues His159 and Glu168 each contribute to the substrate site. Catalysis depends on Glu211, which acts as the Proton donor. Mg(2+) contacts are provided by Asp246, Glu295, and Asp322. Substrate-binding residues include Glu295 and Asp322. The active-site Proton acceptor is the Lys347. Residues 374-377 (SHRS) and Lys398 contribute to the substrate site.

It belongs to the enolase family. As to quaternary structure, homodimer. Mg(2+) serves as cofactor.

Its subcellular location is the cytoplasm. It carries out the reaction (2R)-2-phosphoglycerate = phosphoenolpyruvate + H2O. It participates in carbohydrate degradation; glycolysis; pyruvate from D-glyceraldehyde 3-phosphate: step 4/5. The chain is Enolase from Neocallimastix frontalis (Rumen fungus).